The chain runs to 272 residues: Exosome complex component Rrp42 (272 aa).

Belongs to the RNase PH family. Rrp42 subfamily. As to quaternary structure, component of the archaeal exosome complex. Forms a hexameric ring-like arrangement composed of 3 Rrp41-Rrp42 heterodimers. The hexameric ring associates with a trimer of Rrp4 and/or Csl4 subunits.

Its subcellular location is the cytoplasm. Functionally, non-catalytic component of the exosome, which is a complex involved in RNA degradation. Contributes to the structuring of the Rrp41 active site. The polypeptide is Exosome complex component Rrp42 (Thermococcus kodakarensis (strain ATCC BAA-918 / JCM 12380 / KOD1) (Pyrococcus kodakaraensis (strain KOD1))).